We begin with the raw amino-acid sequence, 408 residues long: MITINENYLKLQASYLFSDIAKRVATFQEENPEKEVIKLGIGDVTRGLTPSVIAAFHQAVDEMANDSTFHGYGPEQGYAFLREAIAENDFQSRGAGIVADEIFVSDGAKCDTSNIQEIFSAETKIAIPDPVYPVYLDTNVMAGRTGLFADGRYQNIVYLDSTKENNFVPELPTEKVDLIYLCFPNNPTGSTITKAGLKRWVDYAIENKALILFDAAYEAFIQDDTLPKSIYEIEGADKVAIEFRSFSKNAGFTGTRCAYTVVPKACMAYDSEGNSHSLHSMWNRRHCTKFNGVSYPIQRAAAATYTPEGKAECKELIDYYMANAKVVXSNHDKLGYSYVGGENSPYIWIDGKTDSWEFFDMLLSKAGVVCTPGAGFGTCCGNGYIRISAFNSPENIEKAMARITEALS.

Substrate-binding residues include tyrosine 15 and glycine 42. Pyridoxal 5'-phosphate-binding positions include tyrosine 72, 108–109 (AK), tyrosine 132, asparagine 186, tyrosine 217, and 245–247 (SFS). Lysine 109, tyrosine 132, and asparagine 186 together coordinate substrate. The residue at position 248 (lysine 248) is an N6-(pyridoxal phosphate)lysine. 2 residues coordinate pyridoxal 5'-phosphate: arginine 256 and asparagine 291. Residues asparagine 291 and arginine 386 each coordinate substrate.

The protein belongs to the class-I pyridoxal-phosphate-dependent aminotransferase family. LL-diaminopimelate aminotransferase subfamily. Homodimer. Pyridoxal 5'-phosphate is required as a cofactor.

It catalyses the reaction (2S,6S)-2,6-diaminopimelate + 2-oxoglutarate = (S)-2,3,4,5-tetrahydrodipicolinate + L-glutamate + H2O + H(+). The protein operates within amino-acid biosynthesis; L-lysine biosynthesis via DAP pathway; LL-2,6-diaminopimelate from (S)-tetrahydrodipicolinate (aminotransferase route): step 1/1. Its function is as follows. Involved in the synthesis of meso-diaminopimelate (m-DAP or DL-DAP), required for both lysine and peptidoglycan biosynthesis. Catalyzes the direct conversion of tetrahydrodipicolinate to LL-diaminopimelate. The chain is LL-diaminopimelate aminotransferase from Desulfotalea psychrophila (strain LSv54 / DSM 12343).